We begin with the raw amino-acid sequence, 78 residues long: Acyl carrier protein (78 aa).

A Carrier domain is found at Ala-4 to Lys-78. Position 39 is an O-(pantetheine 4'-phosphoryl)serine (Ser-39).

The protein belongs to the acyl carrier protein (ACP) family. Post-translationally, 4'-phosphopantetheine is transferred from CoA to a specific serine of apo-ACP by AcpS. This modification is essential for activity because fatty acids are bound in thioester linkage to the sulfhydryl of the prosthetic group.

Its subcellular location is the cytoplasm. The protein operates within lipid metabolism; fatty acid biosynthesis. Its function is as follows. Carrier of the growing fatty acid chain in fatty acid biosynthesis. The sequence is that of Acyl carrier protein from Chlorobium luteolum (strain DSM 273 / BCRC 81028 / 2530) (Pelodictyon luteolum).